The chain runs to 508 residues: ATP synthase subunit alpha (508 aa).

Position 169–176 (169–176 (GDRGTGKS)) interacts with ATP.

Belongs to the ATPase alpha/beta chains family. F-type ATPases have 2 components, CF(1) - the catalytic core - and CF(0) - the membrane proton channel. CF(1) has five subunits: alpha(3), beta(3), gamma(1), delta(1), epsilon(1). CF(0) has three main subunits: a(1), b(2) and c(9-12). The alpha and beta chains form an alternating ring which encloses part of the gamma chain. CF(1) is attached to CF(0) by a central stalk formed by the gamma and epsilon chains, while a peripheral stalk is formed by the delta and b chains.

The protein localises to the cell membrane. The enzyme catalyses ATP + H2O + 4 H(+)(in) = ADP + phosphate + 5 H(+)(out). Functionally, produces ATP from ADP in the presence of a proton gradient across the membrane. The alpha chain is a regulatory subunit. This is ATP synthase subunit alpha from Natranaerobius thermophilus (strain ATCC BAA-1301 / DSM 18059 / JW/NM-WN-LF).